Consider the following 585-residue polypeptide: Auxin response factor 17 (585 aa).

Residues phenylalanine 119–proline 221 constitute a DNA-binding region (TF-B3). Disordered regions lie at residues glutamate 483–leucine 517 and glutamate 535–glycine 585. Residues glycine 488–leucine 510 show a composition bias toward low complexity. Residues lysine 573–glycine 585 are compositionally biased toward polar residues.

This sequence belongs to the ARF family. As to quaternary structure, homo and heterodimers.

It is found in the nucleus. Auxin response factors (ARFs) are transcriptional factors that bind specifically to the DNA sequence 5'-TGTCTC-3' found in the auxin-responsive promoter elements (AuxREs). Could act as transcriptional activator or repressor. Formation of heterodimers with Aux/IAA proteins may alter their ability to modulate early auxin response genes expression. The protein is Auxin response factor 17 (ARF17) of Arabidopsis thaliana (Mouse-ear cress).